Consider the following 711-residue polypeptide: Polyribonucleotide nucleotidyltransferase (711 aa).

The Mg(2+) site is built by Asp486 and Asp492. The KH domain occupies 553 to 612; sequence PRIHTIKISTDKIKDVIGKGGSVIRALTEETGTTIEIEDDGTVKIAATDGEKAKYAIRRI. The S1 motif domain occupies 622 to 690; sequence GRIYNSKVTR…RQGRVRLSIK (69 aa). Residues 689 to 711 form a disordered region; it reads IKEATEQSQPAAAPEAPASEQAE. Low complexity predominate over residues 694 to 711; it reads EQSQPAAAPEAPASEQAE.

This sequence belongs to the polyribonucleotide nucleotidyltransferase family. Component of the RNA degradosome, which is a multiprotein complex involved in RNA processing and mRNA degradation. Requires Mg(2+) as cofactor.

It localises to the cytoplasm. It carries out the reaction RNA(n+1) + phosphate = RNA(n) + a ribonucleoside 5'-diphosphate. Involved in mRNA degradation. Catalyzes the phosphorolysis of single-stranded polyribonucleotides processively in the 3'- to 5'-direction. This chain is Polyribonucleotide nucleotidyltransferase, found in Salmonella typhi.